The sequence spans 449 residues: ATP-dependent protease ATPase subunit HslU (449 aa).

Residues Ile18, 60–65, Asp261, Glu327, and Arg399 contribute to the ATP site; that span reads GVGKTE.

This sequence belongs to the ClpX chaperone family. HslU subfamily. As to quaternary structure, a double ring-shaped homohexamer of HslV is capped on each side by a ring-shaped HslU homohexamer. The assembly of the HslU/HslV complex is dependent on binding of ATP.

The protein resides in the cytoplasm. Its function is as follows. ATPase subunit of a proteasome-like degradation complex; this subunit has chaperone activity. The binding of ATP and its subsequent hydrolysis by HslU are essential for unfolding of protein substrates subsequently hydrolyzed by HslV. HslU recognizes the N-terminal part of its protein substrates and unfolds these before they are guided to HslV for hydrolysis. The chain is ATP-dependent protease ATPase subunit HslU from Oleidesulfovibrio alaskensis (strain ATCC BAA-1058 / DSM 17464 / G20) (Desulfovibrio alaskensis).